The following is a 349-amino-acid chain: Protein RecA (349 aa).

65–72 (GPESSGKT) lines the ATP pocket.

It belongs to the RecA family.

The protein resides in the cytoplasm. In terms of biological role, can catalyze the hydrolysis of ATP in the presence of single-stranded DNA, the ATP-dependent uptake of single-stranded DNA by duplex DNA, and the ATP-dependent hybridization of homologous single-stranded DNAs. It interacts with LexA causing its activation and leading to its autocatalytic cleavage. The sequence is that of Protein RecA from Azotobacter vinelandii.